Reading from the N-terminus, the 822-residue chain is Structure-specific endonuclease subunit SLX4 (822 aa).

Disordered stretches follow at residues 1–39 (MSHL…PSAS), 73–117 (TPAV…PRPL), 277–362 (GTTN…GVSD), 390–418 (RVSS…TSVS), 456–507 (KSHE…SGQL), and 589–676 (KNSA…QASS). Polar residues predominate over residues 13-39 (SPSPSQIFGSSTTPVATNSTHSEPSAS). Over residues 280-294 (NSSSSEGSSNKSSGK) the composition is skewed to low complexity. The span at 310–320 (VTTITSLSTAQ) shows a compositional bias: polar residues. A compositionally biased stretch (basic residues) spans 342–354 (GKRSKSQTKKGGN). The segment covering 460-470 (SSTLTLPSTST) has biased composition (low complexity). Over residues 471–484 (NASNQGFSSQNTIN) the composition is skewed to polar residues. Over residues 490–506 (SQTTSTTTESTGVESGQ) the composition is skewed to low complexity. Over residues 589–612 (KNSAPTSLPANNANPPDSHASGQK) the composition is skewed to polar residues. A compositionally biased stretch (basic residues) spans 627-636 (TTKRASKAPQ). The span at 637-650 (KKQSTSSTSHSAKA) shows a compositional bias: low complexity.

The protein belongs to the SLX4 family. Forms a heterodimer with SLX1. Post-translationally, phosphorylated in response to DNA damage.

It is found in the nucleus. Its function is as follows. Regulatory subunit of the SLX1-SLX4 structure-specific endonuclease that resolves DNA secondary structures generated during DNA repair and recombination. Has endonuclease activity towards branched DNA substrates, introducing single-strand cuts in duplex DNA close to junctions with ss-DNA. This is Structure-specific endonuclease subunit SLX4 from Coccidioides immitis (strain RS) (Valley fever fungus).